A 276-amino-acid polypeptide reads, in one-letter code: SKA complex subunit 1 homolog (276 aa).

Residues 48 to 78 (VDVSLTAMEAQLQAVRRRLQEEREAFPKAKK) are a coiled coil.

This sequence belongs to the SKA1 family.

This is SKA complex subunit 1 homolog from Oryza sativa subsp. japonica (Rice).